The sequence spans 56 residues: uncharacterized protein (56 aa).

Residues 33–53 (INIIYLAIMKIIMNIIMMIMI) form a helical membrane-spanning segment.

The protein localises to the host membrane. This is an uncharacterized protein from Bos taurus (Bovine).